The following is a 164-amino-acid chain: MTHDKTCPCGSPKIYQDCCQILHLGLDSGAQLATSPEQLMRSRYCAFVLKNFDYIIKTHHAAYLDGLTLEQLQQGPHPEWLGLDVLSANDTTQPDGSKFGTVTFKAWYKMSGEIDAIYERSEFIFEQGRWFYTKGHQMHAKLPGRNDPCVCHSGKKFKQCCMKG.

Belongs to the UPF0225 family.

This Shewanella sp. (strain ANA-3) protein is UPF0225 protein Shewana3_2159.